Reading from the N-terminus, the 88-residue chain is Small ribosomal subunit protein bS20 (88 aa).

Belongs to the bacterial ribosomal protein bS20 family. Part of the 30S ribosomal subunit.

In terms of biological role, binds directly to 16S ribosomal RNA. The protein is Small ribosomal subunit protein bS20 (rpsT) of Bacillus subtilis (strain 168).